The following is a 404-amino-acid chain: Putative glutamate--cysteine ligase 2 (404 aa).

Residues 377–404 form a disordered region; the sequence is GPAGKRAHEGGRSFRPAAGAPMSIRGQE.

It belongs to the glutamate--cysteine ligase type 2 family. YbdK subfamily.

It carries out the reaction L-cysteine + L-glutamate + ATP = gamma-L-glutamyl-L-cysteine + ADP + phosphate + H(+). Its function is as follows. ATP-dependent carboxylate-amine ligase which exhibits weak glutamate--cysteine ligase activity. This is Putative glutamate--cysteine ligase 2 from Pseudomonas aeruginosa (strain UCBPP-PA14).